Reading from the N-terminus, the 574-residue chain is DNA polymerase alpha subunit B (574 aa).

Belongs to the DNA polymerase alpha subunit B family. Component of the alpha DNA polymerase complex (also known as the alpha DNA polymerase-primase complex) consisting of four subunits: the catalytic subunit pol1, the accessory subunit spb70/pol12, and the primase complex subunits spp1/pri1 and spp2/pri2 respectively. Interacts with orc1. Interacts with orc2; the interaction occurs on the chromatin, is stable thoughout the cell cycle and is independent from spb70 role in the alpha DNA polymerase complex. Phosphorylated in a cell cycle-dependent manner.

It is found in the nucleus. The protein resides in the chromosome. In terms of biological role, accessory subunit of the DNA polymerase alpha complex (also known as the alpha DNA polymerase-primase complex) which plays an essential role in the initiation of DNA synthesis. During the S phase of the cell cycle, the DNA polymerase alpha complex (composed of a catalytic subunit pol1, an accessory subunit spb70/pol12 and two primase subunits, the catalytic subunit spp1/pri1 and the regulatory subunit spp2/pri2) is recruited to DNA at the replicative forks. The primase subunit of the polymerase alpha complex initiates DNA synthesis by oligomerising short RNA primers on both leading and lagging strands. This is DNA polymerase alpha subunit B from Schizosaccharomyces pombe (strain 972 / ATCC 24843) (Fission yeast).